The sequence spans 511 residues: Bifunctional purine biosynthesis protein PurH (511 aa).

One can recognise an MGS-like domain in the interval 1–145 (MKKRALVSVS…KNHKFVSVIV (145 aa)).

The protein belongs to the PurH family.

The catalysed reaction is (6R)-10-formyltetrahydrofolate + 5-amino-1-(5-phospho-beta-D-ribosyl)imidazole-4-carboxamide = 5-formamido-1-(5-phospho-D-ribosyl)imidazole-4-carboxamide + (6S)-5,6,7,8-tetrahydrofolate. It catalyses the reaction IMP + H2O = 5-formamido-1-(5-phospho-D-ribosyl)imidazole-4-carboxamide. It participates in purine metabolism; IMP biosynthesis via de novo pathway; 5-formamido-1-(5-phospho-D-ribosyl)imidazole-4-carboxamide from 5-amino-1-(5-phospho-D-ribosyl)imidazole-4-carboxamide (10-formyl THF route): step 1/1. The protein operates within purine metabolism; IMP biosynthesis via de novo pathway; IMP from 5-formamido-1-(5-phospho-D-ribosyl)imidazole-4-carboxamide: step 1/1. The polypeptide is Bifunctional purine biosynthesis protein PurH (Bacillus cereus (strain ZK / E33L)).